A 276-amino-acid chain; its full sequence is Bis(5'-nucleosyl)-tetraphosphatase, symmetrical (276 aa).

Belongs to the Ap4A hydrolase family.

It carries out the reaction P(1),P(4)-bis(5'-adenosyl) tetraphosphate + H2O = 2 ADP + 2 H(+). Hydrolyzes diadenosine 5',5'''-P1,P4-tetraphosphate to yield ADP. This Tolumonas auensis (strain DSM 9187 / NBRC 110442 / TA 4) protein is Bis(5'-nucleosyl)-tetraphosphatase, symmetrical.